A 121-amino-acid chain; its full sequence is Putative ankyrin repeat protein L215 (121 aa).

ANK repeat units follow at residues 10–40 (QYDS…SFKE) and 42–71 (IHET…NKLV).

The protein is Putative ankyrin repeat protein L215 of Acanthamoeba polyphaga mimivirus (APMV).